Reading from the N-terminus, the 366-residue chain is MRSVLSFEKLDSIGEGTYGIVSKGRDKETGRIVALKKVKIGQQDKDGIPLTSLREIQILKEIKHPNIVSLLEVVIGSTGDKIYLVFEYLEHDVASLIDNINKPFKLSEIKCFLLQLLRAVEYLHSHWIIHRDLKCSNLLYGNNGNLKLADFGLARKFGYPIESITPCMVTLWYRSPELLLGCQKYSTAVDLWSIGSIFGELLIGRPLITGNNEVDQIMRIFNLLGEPNEQIWPGFSSLPNFKRLNNIPHQPYNNLRELVPTISDTAFDLLNQLLTYDPTKRITASDAIKHPFFYENPFPQSIEMMPKFPTISKSFKNQNKKQNNNFNNFVQNNQTNQNNQTNQNNQTNQNNKTSQNNNMDSYKYSK.

One can recognise a Protein kinase domain in the interval 7–293; that stretch reads FEKLDSIGEG…ASDAIKHPFF (287 aa). ATP is bound by residues 13–21 and Lys-36; that span reads IGEGTYGIV. Catalysis depends on Asp-132, which acts as the Proton acceptor. Residues 315-358 show a composition bias toward low complexity; sequence FKNQNKKQNNNFNNFVQNNQTNQNNQTNQNNQTNQNNKTSQNNN. The segment at 315–366 is disordered; that stretch reads FKNQNKKQNNNFNNFVQNNQTNQNNQTNQNNQTNQNNKTSQNNNMDSYKYSK.

It belongs to the protein kinase superfamily. CMGC Ser/Thr protein kinase family. CDC2/CDKX subfamily.

The enzyme catalyses L-seryl-[protein] + ATP = O-phospho-L-seryl-[protein] + ADP + H(+). It catalyses the reaction L-threonyl-[protein] + ATP = O-phospho-L-threonyl-[protein] + ADP + H(+). The protein is Probable cyclin-dependent kinase 10 (cdk10) of Dictyostelium discoideum (Social amoeba).